A 362-amino-acid chain; its full sequence is Sphingolipid delta(4)-desaturase (362 aa).

Over residues 1-10 the composition is skewed to low complexity; that stretch reads MAESTATTTA. Residues 1–20 form a disordered region; that stretch reads MAESTATTTAVPPPAEESWN. 3 helical membrane-spanning segments follow: residues 60–80, 90–110, and 121–143; these read PLTK…AYLL, FFLT…LAIH, and TLYN…AASF. A Histidine box-1 motif is present at residues 110-114; the sequence is HELSH. A Histidine box-2 motif is present at residues 147–151; the sequence is HMEHH. The next 3 helical transmembrane spans lie at 169-189, 200-220, and 228-248; these read LILF…LLFY, PFTL…YLVV, and LAYF…AGHF. Positions 290–294 match the Histidine box-3 motif; it reads HIEHH.

It belongs to the fatty acid desaturase type 1 family. DEGS subfamily.

The protein resides in the membrane. The catalysed reaction is an N-acylsphinganine + 2 Fe(II)-[cytochrome b5] + O2 + 2 H(+) = an N-acylsphing-4-enine + 2 Fe(III)-[cytochrome b5] + 2 H2O. It participates in lipid metabolism; sphingolipid metabolism. Functionally, delta(4)-fatty-acid desaturase which introduces a double bond at the 4-position in the long-chain base (LCB) of ceramides. Required for sphingosine biosynthesis. The protein is Sphingolipid delta(4)-desaturase (dsd1) of Schizosaccharomyces pombe (strain 972 / ATCC 24843) (Fission yeast).